The chain runs to 391 residues: MTDDDSETSASETQAQEESDLPVFQLCGLVEELSYGNSALKTETEMFEKYYNKLELKDQRPPRLSEIKITGAEIAQLRSRRKSKSRMGMERVMGLSVDQKLELVQKELEDTKDEIRHMRANAERDLQHHEAIIEEAEIRWTEVQKEVHDFEKDILKTISKKKGSILATQKVMKYIEDMNRRRDNMKDKLRLKNVSLKVQRKKLLLQLRQKEEVGEALHDVDFQQLKIENAQFLETIEARNQELIQMKLASGNTLQILNAYKRSSLLKTSRVVILQSKLHHAMQMSLNLTKEFLLRKELLEKIEKETLQAEEDRAKALALNKQLRKQLSEFRAPQVMIYIWEKIRNGDLEKTIRMWERKVEIAEMSLKGYRKAWNKMKTTNEQLQAISGPGK.

Positions 1 to 21 (MTDDDSETSASETQAQEESDL) are disordered. Coiled coils occupy residues 95–243 (LSVD…NQEL) and 294–369 (LRKE…LKGY).

Belongs to the CFAP263 family. In terms of assembly, forms a complex with CFAP184; the interaction is required for functional activity in cilia. Interacts with HAP1 and PCM1.

It localises to the cytoplasm. The protein localises to the cytoskeleton. The protein resides in the microtubule organizing center. Its subcellular location is the centrosome. It is found in the centriolar satellite. It localises to the cell projection. The protein localises to the cilium. Component of centriolar satellites contributing to primary cilium formation. In complex with CFAP263, acts as a regulator of ciliary beating that connects radial spoke 3 (RS3) to the inner dynein arm (IDA) and the nexin-dynein regulatory complex (N-DRC). The complex is positioned parallel to N-DRC and forms a connection between the arch at the base of RS3, the IDA tail and N-DRC. In Bos taurus (Bovine), this protein is Cilia- and flagella-associated protein 263 (CFAP263).